A 1176-amino-acid chain; its full sequence is Histidine kinase 2 (1176 aa).

Residues 1–29 (MSITCELLNLTSKKAKKSSSSDKKWLKKP) lie on the Cytoplasmic side of the membrane. Residues 30 to 50 (LFFLILCGSLVIVLVMFLRLG) traverse the membrane as a helical segment. The Extracellular portion of the chain corresponds to 51-174 (RSQKEETDSC…LEQGLSSYLR (124 aa)). Residues 175 to 195 (NAWWCLILGVLVCHKIYVSHS) form a helical membrane-spanning segment. Over 196 to 232 (KARGERKEKVHLQEALAPKKQQQRAQTSSRGAGRWRK) the chain is Cytoplasmic. The helical transmembrane segment at 233-253 (NILLLGILGGVSFSVWWFWDT) threads the bilayer. Residues 254–536 (NEEIIMKRRE…CRFKHKLPIP (283 aa)) lie on the Extracellular side of the membrane. Positions 302–526 (IPSAIDQRTF…GDPSRNHEMH (225 aa)) constitute a CHASE domain. A helical transmembrane segment spans residues 537–557 (WTAITPSILVLVITFLVGYIL). Topologically, residues 558-1176 (YEAINRIATV…TAVARFFEPC (619 aa)) are cytoplasmic. In terms of domain architecture, Histidine kinase spans 594-867 (TVSHEIRTPM…TFSFTGVFGK (274 aa)). Phosphohistidine; by autocatalysis is present on histidine 597. Response regulatory domains lie at 891–1013 (RALV…QETL) and 1036–1173 (QILV…ARFF). Residues aspartate 942 and aspartate 1086 each carry the 4-aspartylphosphate modification.

In terms of assembly, self-interacts. Interacts with AHK3, AHP1, AHP2, AHP3, AHP5, ATAF2, AT2S3, BETAA-AD, CYP20-2, DRP1A, HIR1, HIR2, PI4KB1, PI4KG5 and At4g12060. In terms of processing, autophosphorylated predominantly on His residues. Activation probably requires a transfer of a phosphate group between a His in the transmitter domain and an Asp of the receiver domain. Expressed in roots, leaves and flowers, mostly in the vascular tissues. Present in seedlings.

The protein resides in the endoplasmic reticulum membrane. The enzyme catalyses ATP + protein L-histidine = ADP + protein N-phospho-L-histidine.. Its activity is regulated as follows. Activated by cytokinins to initiate phosphorelay signaling. Its function is as follows. Cytokinins (CK) receptor related to bacterial two-component regulators. Functions as a histidine kinase and transmits the stress signal to a downstream MAPK cascade. This protein undergoes an ATP-dependent autophosphorylation at a conserved histidine residue in the kinase core, and a phosphoryl group is then transferred to a conserved aspartate residue in the receiver domain. In the presence of cytokinin, feeds phosphate to phosphorelay-integrating histidine phosphotransfer protein (HPt) and activates subsequent cascade. Involved in meristems establishment in seedlings. Redundant negative regulator of drought and salt stress responses and abscisic acid (ABA) signaling. Together with AHK3, plays a negative regulatory role in cold stress signaling via inhibition of ABA response, occurring independently of the cold acclimation pathway. Redundant positive regulator of cytokinin signaling that regulates many developmental processes including seed germination, cell division, seed size, chlorophyll retention during leaf senescence, root repression and shoot promotion. Involved in alkamides (e.g. N-isobutyl decanamide) and N-acylethanolamides (NAE) signaling that control meristematic activity and differentiation processes during plant development. Contributes to vascular bundle formation and secondary growth in a cytokinin-dependent manner, probably by promoting the maintenance of mitotic activity and/or identity of procambial cells. Together with AHK4, required for growth and reproduction promotion stimulated by the endophytic fungus Piriformospora indica in a trans-zeatin-dependent manner. Required by the cytokinin-dependent flower development regulation pathway. The protein is Histidine kinase 2 (AHK2) of Arabidopsis thaliana (Mouse-ear cress).